Consider the following 324-residue polypeptide: Acetyl-coenzyme A carboxylase carboxyl transferase subunit beta (324 aa).

Low complexity predominate over residues 1 to 16 (MTKNNNDLSNSSSNPP). The segment at 1–51 (MTKNNNDLSNSSSNPPSNRPVAGKEAELEIQRETHAAQSGQSESWLSRPIP) is disordered. The span at 22-35 (AGKEAELEIQRETH) shows a compositional bias: basic and acidic residues. A compositionally biased stretch (polar residues) spans 36-45 (AAQSGQSESW). Residues 68 to 324 (PSTECPQCHS…YRLLAKLTHV (257 aa)) enclose the CoA carboxyltransferase N-terminal domain. Residues Cys72, Cys75, Cys91, and Cys94 each coordinate Zn(2+). The segment at 72–94 (CPQCHSMITNTALIFNAYVCPHC) adopts a C4-type zinc-finger fold.

The protein belongs to the AccD/PCCB family. As to quaternary structure, acetyl-CoA carboxylase is a heterohexamer composed of biotin carboxyl carrier protein (AccB), biotin carboxylase (AccC) and two subunits each of ACCase subunit alpha (AccA) and ACCase subunit beta (AccD). Requires Zn(2+) as cofactor.

It is found in the cytoplasm. It carries out the reaction N(6)-carboxybiotinyl-L-lysyl-[protein] + acetyl-CoA = N(6)-biotinyl-L-lysyl-[protein] + malonyl-CoA. Its pathway is lipid metabolism; malonyl-CoA biosynthesis; malonyl-CoA from acetyl-CoA: step 1/1. Its function is as follows. Component of the acetyl coenzyme A carboxylase (ACC) complex. Biotin carboxylase (BC) catalyzes the carboxylation of biotin on its carrier protein (BCCP) and then the CO(2) group is transferred by the transcarboxylase to acetyl-CoA to form malonyl-CoA. This Psychrobacter sp. (strain PRwf-1) protein is Acetyl-coenzyme A carboxylase carboxyl transferase subunit beta.